A 422-amino-acid chain; its full sequence is Electron transfer flavoprotein subunit alpha (422 aa).

The tract at residues 61–80 is disordered; sequence KRIDRSGTQQGAGGGKASAS. FAD contacts are provided by residues 329–330, 343–347, 360–367, and Asn-381; these read SR, QVGAT, and GISGAIQH.

Belongs to the ETF alpha-subunit/FixB family. As to quaternary structure, heterodimer of an alpha and a beta subunit. FAD is required as a cofactor.

Participates in the electron transfer process during N,N-dimethylglycine (DMG) degradation to sarcosine. The protein is Electron transfer flavoprotein subunit alpha of Chromohalobacter salexigens (strain ATCC BAA-138 / DSM 3043 / CIP 106854 / NCIMB 13768 / 1H11).